Reading from the N-terminus, the 365-residue chain is Phospho-N-acetylmuramoyl-pentapeptide-transferase (365 aa).

The next 10 membrane-spanning stretches (helical) occupy residues 22–42 (YISVRIIMISITSLLITLALG), 74–94 (TMGGVLILSSVIISCLLWGDL), 95–115 (TSIYLWILILVVIFFGAIGFF), 133–153 (YKFALQSIFSIVLAIVLFYLL), 168–188 (SLYIPIGIVIFVVLAFFIING), 201–221 (GLAIVPVVLVAAGLGIYAYIE), 240–260 (LAEVAVFCAAVCGSGLAFLWF), 267–287 (VFMGDVGSLTLGAVLGVIAVM), 292–312 (LIFFIMGLLFVVEALSVMLQV), and 342–362 (KVVIRFWIISLILFLIGLAAI).

The protein belongs to the glycosyltransferase 4 family. MraY subfamily. Mg(2+) is required as a cofactor.

Its subcellular location is the cell inner membrane. The enzyme catalyses UDP-N-acetyl-alpha-D-muramoyl-L-alanyl-gamma-D-glutamyl-meso-2,6-diaminopimeloyl-D-alanyl-D-alanine + di-trans,octa-cis-undecaprenyl phosphate = di-trans,octa-cis-undecaprenyl diphospho-N-acetyl-alpha-D-muramoyl-L-alanyl-D-glutamyl-meso-2,6-diaminopimeloyl-D-alanyl-D-alanine + UMP. The protein operates within cell wall biogenesis; peptidoglycan biosynthesis. In terms of biological role, catalyzes the initial step of the lipid cycle reactions in the biosynthesis of the cell wall peptidoglycan: transfers peptidoglycan precursor phospho-MurNAc-pentapeptide from UDP-MurNAc-pentapeptide onto the lipid carrier undecaprenyl phosphate, yielding undecaprenyl-pyrophosphoryl-MurNAc-pentapeptide, known as lipid I. The protein is Phospho-N-acetylmuramoyl-pentapeptide-transferase of Francisella tularensis subsp. tularensis (strain FSC 198).